The following is a 276-amino-acid chain: Hydroxyethylthiazole kinase (276 aa).

2 residues coordinate ATP: R126 and S172. Residue G199 participates in substrate binding.

Belongs to the Thz kinase family. Mg(2+) serves as cofactor.

It catalyses the reaction 5-(2-hydroxyethyl)-4-methylthiazole + ATP = 4-methyl-5-(2-phosphooxyethyl)-thiazole + ADP + H(+). Its pathway is cofactor biosynthesis; thiamine diphosphate biosynthesis; 4-methyl-5-(2-phosphoethyl)-thiazole from 5-(2-hydroxyethyl)-4-methylthiazole: step 1/1. Catalyzes the phosphorylation of the hydroxyl group of 4-methyl-5-beta-hydroxyethylthiazole (THZ). The polypeptide is Hydroxyethylthiazole kinase (Burkholderia pseudomallei (strain 1710b)).